A 309-amino-acid polypeptide reads, in one-letter code: Acetylglutamate kinase (309 aa).

Substrate contacts are provided by residues glycine 69–glycine 70, arginine 91, and asparagine 194.

Belongs to the acetylglutamate kinase family. ArgB subfamily.

It localises to the cytoplasm. It catalyses the reaction N-acetyl-L-glutamate + ATP = N-acetyl-L-glutamyl 5-phosphate + ADP. It functions in the pathway amino-acid biosynthesis; L-arginine biosynthesis; N(2)-acetyl-L-ornithine from L-glutamate: step 2/4. Its function is as follows. Catalyzes the ATP-dependent phosphorylation of N-acetyl-L-glutamate. The sequence is that of Acetylglutamate kinase from Vesicomyosocius okutanii subsp. Calyptogena okutanii (strain HA).